A 228-amino-acid polypeptide reads, in one-letter code: Ribosomal RNA small subunit methyltransferase G (228 aa).

S-adenosyl-L-methionine contacts are provided by residues Gly89, Leu94, 140–141 (VE), and Arg159.

Belongs to the methyltransferase superfamily. RNA methyltransferase RsmG family.

It is found in the cytoplasm. It carries out the reaction guanosine(527) in 16S rRNA + S-adenosyl-L-methionine = N(7)-methylguanosine(527) in 16S rRNA + S-adenosyl-L-homocysteine. Specifically methylates the N7 position of guanine in position 527 of 16S rRNA. The polypeptide is Ribosomal RNA small subunit methyltransferase G (Burkholderia vietnamiensis (strain G4 / LMG 22486) (Burkholderia cepacia (strain R1808))).